The sequence spans 196 residues: Large ribosomal subunit protein bL9c (196 aa).

The transit peptide at 1–41 (MASTTSTLSLSWSNSFHSFAGAISEPQKSPENCRVMLPIVA) directs the protein to the chloroplast.

As to quaternary structure, component of the chloroplast large ribosomal subunit (LSU). Mature 70S chloroplast ribosomes of higher plants consist of a small (30S) and a large (50S) subunit. The 30S small subunit contains 1 molecule of ribosomal RNA (16S rRNA) and 24 different proteins. The 50S large subunit contains 3 rRNA molecules (23S, 5S and 4.5S rRNA) and 33 different proteins.

It localises to the plastid. Its subcellular location is the chloroplast. Its function is as follows. Component of the chloroplast ribosome (chloro-ribosome), a dedicated translation machinery responsible for the synthesis of chloroplast genome-encoded proteins, including proteins of the transcription and translation machinery and components of the photosynthetic apparatus. The protein is Large ribosomal subunit protein bL9c (RPL9) of Spinacia oleracea (Spinach).